We begin with the raw amino-acid sequence, 368 residues long: Ferrochelatase (368 aa).

His209 and Glu290 together coordinate Fe cation. A disordered region spans residues 347-368 (REEQEQQAHISREEARRLGADQ).

This sequence belongs to the ferrochelatase family.

It is found in the cytoplasm. The enzyme catalyses heme b + 2 H(+) = protoporphyrin IX + Fe(2+). It functions in the pathway porphyrin-containing compound metabolism; protoheme biosynthesis; protoheme from protoporphyrin-IX: step 1/1. In terms of biological role, catalyzes the ferrous insertion into protoporphyrin IX. The sequence is that of Ferrochelatase from Janthinobacterium sp. (strain Marseille) (Minibacterium massiliensis).